Consider the following 319-residue polypeptide: Putative G-protein coupled receptor B0244.7 (319 aa).

Residue Asn28 is glycosylated (N-linked (GlcNAc...) asparagine). 6 helical membrane-spanning segments follow: residues 49–69, 107–127, 131–151, 166–186, 206–226, and 261–281; these read AIFIIPCCMSFFALFLNIYIF, LPVIIFLTHFNFWVIALFIIF, SFLSFIGGMVGTTLTIYIAVV, VLLILLLWVSAITVAISCGIV, GPVLIFGIVCIATAFSICLVI, and LFAGFFVFATMAIFEIASAII.

This sequence belongs to the G-protein coupled receptor 1 family. B0244 subfamily.

It is found in the cell membrane. In Caenorhabditis elegans, this protein is Putative G-protein coupled receptor B0244.7.